A 244-amino-acid polypeptide reads, in one-letter code: Glutathione S-transferase theta-2 (244 aa).

The 81-residue stretch at 2–82 (GLELFLDLVS…YLSCKYQTPD (81 aa)) folds into the GST N-terminal domain. Residues 40–41 (HK), 53–54 (KL), 66–67 (ES), and 104–107 (DCIR) each bind glutathione. One can recognise a GST C-terminal domain in the interval 88-224 (DLQARARVHE…SILEQAAKKT (137 aa)).

Belongs to the GST superfamily. Theta family. Homodimer. In terms of tissue distribution, expressed at low levels in liver. In lung, expressed at low levels in ciliated bronchiolar cells, alveolar macrophages and alveolar type II cells.

The protein localises to the cytoplasm. Its subcellular location is the cytosol. It localises to the nucleus. The catalysed reaction is RX + glutathione = an S-substituted glutathione + a halide anion + H(+). Conjugation of reduced glutathione to a wide number of exogenous and endogenous hydrophobic electrophiles. Has a sulfatase activity. This is Glutathione S-transferase theta-2 (GSTT2) from Homo sapiens (Human).